The chain runs to 301 residues: Tyrosine recombinase XerC (301 aa).

The Core-binding (CB) domain occupies 2–84 (TNTQFYITNF…TLRSFFSYLY (83 aa)). The Tyr recombinase domain maps to 105-291 (ALPKFLTVDD…DLKHLIEVYD (187 aa)). Residues Arg145, Lys169, His243, Arg246, and His269 contribute to the active site. Tyr278 serves as the catalytic O-(3'-phospho-DNA)-tyrosine intermediate.

The protein belongs to the 'phage' integrase family. XerC subfamily. Forms a cyclic heterotetrameric complex composed of two molecules of XerC and two molecules of XerD.

The protein resides in the cytoplasm. Site-specific tyrosine recombinase, which acts by catalyzing the cutting and rejoining of the recombining DNA molecules. The XerC-XerD complex is essential to convert dimers of the bacterial chromosome into monomers to permit their segregation at cell division. It also contributes to the segregational stability of plasmids. This chain is Tyrosine recombinase XerC, found in Thermodesulfovibrio yellowstonii (strain ATCC 51303 / DSM 11347 / YP87).